The primary structure comprises 353 residues: Chorismate synthase (353 aa).

NADP(+) is bound by residues Arg-48 and Arg-54. Residues 125–127, 238–239, Gly-278, 293–297, and Arg-319 contribute to the FMN site; these read RSS, NA, and KPTSS.

This sequence belongs to the chorismate synthase family. In terms of assembly, homotetramer. FMNH2 serves as cofactor.

The enzyme catalyses 5-O-(1-carboxyvinyl)-3-phosphoshikimate = chorismate + phosphate. It functions in the pathway metabolic intermediate biosynthesis; chorismate biosynthesis; chorismate from D-erythrose 4-phosphate and phosphoenolpyruvate: step 7/7. Its function is as follows. Catalyzes the anti-1,4-elimination of the C-3 phosphate and the C-6 proR hydrogen from 5-enolpyruvylshikimate-3-phosphate (EPSP) to yield chorismate, which is the branch point compound that serves as the starting substrate for the three terminal pathways of aromatic amino acid biosynthesis. This reaction introduces a second double bond into the aromatic ring system. The polypeptide is Chorismate synthase (Bordetella pertussis (strain Tohama I / ATCC BAA-589 / NCTC 13251)).